The chain runs to 392 residues: Iron-sulfur cluster assembly SufBD family protein ML0594 (392 aa).

It belongs to the iron-sulfur cluster assembly SufBD family.

In Mycobacterium leprae (strain TN), this protein is Iron-sulfur cluster assembly SufBD family protein ML0594.